Reading from the N-terminus, the 230-residue chain is Cell division ATP-binding protein FtsE (230 aa).

In terms of domain architecture, ABC transporter spans 3 to 228; that stretch reads ITLDHVTKQY…RDEQRGVYGM (226 aa). 37-44 lines the ATP pocket; the sequence is GPSGSGKS.

Belongs to the ABC transporter superfamily. As to quaternary structure, homodimer. Forms a membrane-associated complex with FtsX.

It is found in the cell membrane. In terms of biological role, part of the ABC transporter FtsEX involved in cellular division. Has ATPase activity. The sequence is that of Cell division ATP-binding protein FtsE from Mycobacterium tuberculosis (strain ATCC 25618 / H37Rv).